Here is a 1032-residue protein sequence, read N- to C-terminus: Reticulon-3 (1032 aa).

Residues 1 to 24 show a composition bias toward low complexity; it reads MAEPSAATQSHSISSSSFGAEPSA. Residues 1–61 form a disordered region; sequence MAEPSAATQS…SSSSSQPVSL (61 aa). Position 2 is an N-acetylalanine (Ala2). At 2–863 the chain is on the cytoplasmic side; that stretch reads AEPSAATQSH…KKTGFVFGTT (862 aa). Position 30 is a phosphoserine (Ser30). The segment covering 32-61 has biased composition (low complexity); sequence GACPALGTKSCSSSCADSFVSSSSSQPVSL. Residues Ser229, Ser243, Ser246, Ser283, Ser316, and Ser453 each carry the phosphoserine modification. Residues 545–568 are compositionally biased toward basic and acidic residues; it reads CEREEKTSKNFEELVSDSELHQDQ. A disordered region spans residues 545 to 617; it reads CEREEKTSKN…NPKLPSTVSP (73 aa). Residues 605 to 617 show a composition bias toward polar residues; the sequence is TTENPKLPSTVSP. Phosphoserine is present on residues Ser649 and Ser650. Residues 696–715 show a composition bias toward basic and acidic residues; the sequence is NESGGSEIKDIGSKYSEQSK. The interval 696–726 is disordered; the sequence is NESGGSEIKDIGSKYSEQSKETNGSEPLGVF. Ser735 bears the Phosphoserine mark. The Reticulon domain occupies 844–1032; it reads VHDLIFWRDV…LPGIAKKKAE (189 aa). Residues 864 to 887 constitute an intramembrane region (helical); the sequence is LIMLLSLAAFSVISVVSYLILALL. Topologically, residues 888–947 are cytoplasmic; that stretch reads SVTISFRIYKSVIQAVQKSEEGHPFKAYLDVDITLSSEAFHNYMNAAMVHINRALKLIIR. The helical intramembrane region spans 948–968; sequence LFLVEDLVDSLKLAVFMWLMT. The Cytoplasmic segment spans residues 969-972; it reads YVGA. Positions 973-993 form an intramembrane region, helical; it reads VFNGITLLILAELLIFSVPIV. Residues 987 to 1032 are interaction with FADD; the sequence is IFSVPIVYEKYKTQIDHYVGIARDQTKSIVEKIQAKLPGIAKKKAE. The Cytoplasmic portion of the chain corresponds to 994–1032; the sequence is YEKYKTQIDHYVGIARDQTKSIVEKIQAKLPGIAKKKAE. The tract at residues 1000-1002 is interaction with BACE1; it reads QID.

Homodimer. Interacts with ATL1. Interacts with RTN4. Isoform 3 interacts with BACE1, BACE2, BCL2 and FADD. Interacts with ATL2. Interacts with TMEM33. Interacts with ZFYVE27 and with KIF5A in a ZFYVE27-dependent manner. Interacts with RIGI. Interacts with TRIM25. In terms of assembly, (Microbial infection) Interacts with Coxsackievirus A16, enterovirus 71 and poliovirus P2C proteins. As to quaternary structure, (Microbial infection) Interacts with West Nile virus protein NS4A. Isoform 3 is widely expressed, with highest levels in brain, where it is enriched in neuronal cell bodies from gray matter (at protein level). Three times more abundant in macula than in peripheral retina. Isoform 1 is expressed at high levels in brain and at low levels in skeletal muscle. Isoform 2 is only found in melanoma.

The protein resides in the endoplasmic reticulum membrane. The protein localises to the golgi apparatus membrane. May be involved in membrane trafficking in the early secretory pathway. Inhibits BACE1 activity and amyloid precursor protein processing. May induce caspase-8 cascade and apoptosis. May favor BCL2 translocation to the mitochondria upon endoplasmic reticulum stress. Induces the formation of endoplasmic reticulum tubules. Also acts as an inflammation-resolving regulator by interacting with both TRIM25 and RIGI, subsequently impairing RIGI 'Lys-63'-linked polyubiquitination leading to IRF3 and NF-kappa-B inhibition. Its function is as follows. (Microbial infection) Plays a positive role in viral replication and pathogenesis of enteroviruses. The polypeptide is Reticulon-3 (RTN3) (Homo sapiens (Human)).